The chain runs to 403 residues: Lipase lipl-5 (403 aa).

A signal peptide spans 1–18 (MWRFAVFLAAFFVQDVVG). An N-linked (GlcNAc...) asparagine glycan is attached at Asn-64. Ser-167 functions as the Nucleophile in the catalytic mechanism. A glycan (N-linked (GlcNAc...) asparagine) is linked at Asn-271. Catalysis depends on charge relay system residues Asp-343 and His-375.

It belongs to the AB hydrolase superfamily. Lipase family.

Its subcellular location is the lysosome lumen. The protein resides in the secreted. Lipase involved in lipid homeostasis. Regulates mitochondrial lipid composition, in particular cardiolipins and coenzyme Q-9 levels, in response to nutrient availability. Does not affect global triglyceride levels in response to nutrient availability. However, in coelomocytes, specifically promotes triglyceride catabolism and lifespan extension in response to nutrient deprivation. This is Lipase lipl-5 from Caenorhabditis elegans.